A 229-amino-acid polypeptide reads, in one-letter code: Large ribosomal subunit protein uL1 (229 aa).

As to quaternary structure, part of the 50S ribosomal subunit.

Its function is as follows. Binds directly to 23S rRNA. The L1 stalk is quite mobile in the ribosome, and is involved in E site tRNA release. Protein L1 is also a translational repressor protein, it controls the translation of the L11 operon by binding to its mRNA. The polypeptide is Large ribosomal subunit protein uL1 (Rhodopseudomonas palustris (strain ATCC BAA-98 / CGA009)).